The sequence spans 585 residues: Voltage-gated potassium channel KCNC1 (585 aa).

The Cytoplasmic segment spans residues 1-190 (MGQGDESERI…EDPYSSRYAR (190 aa)). Position 44 is a phosphoserine (S44). Positions 77, 83, 104, and 105 each coordinate Zn(2+). The disordered stretch occupies residues 121-147 (SFGGAPLDNSADDADADGPGDSGDGED). Phosphoserine is present on residues S130, S142, S158, and S160. The span at 130–147 (SADDADADGPGDSGDGED) shows a compositional bias: acidic residues. Residues 191–209 (YVAFASLFFILVSITTFCL) traverse the membrane as a helical segment. N-linked (GlcNAc...) asparagine glycans are attached at residues N220 and N229. Residues 248-267 (IEGVCVVWFTFEFLMRVVFC) traverse the membrane as a helical segment. Over 268 to 276 (PNKVEFIKN) the chain is Cytoplasmic. Residues 277 to 295 (SLNIIDFVAILPFYLEVGL) traverse the membrane as a helical segment. A helical; Voltage-sensor transmembrane segment spans residues 309–331 (FLRVVRFVRILRIFKLTRHFVGL). Residues 332 to 344 (RVLGHTLRASTNE) lie on the Cytoplasmic side of the membrane. A helical membrane pass occupies residues 345–366 (FLLLIIFLALGVLIFATMIYYA). Positions 400, 401, 402, and 403 each coordinate K(+). The Selectivity filter motif lies at 400-405 (TLGYGD). The helical transmembrane segment at 415–436 (LVGALCALAGVLTIAMPVPVIV) threads the bilayer. At 437–585 (NNFGMYYSLA…YMPTEAVRVT (149 aa)) the chain is on the cytoplasmic side. Residue S474 is modified to Phosphoserine. Residue T483 is modified to Phosphothreonine.

This sequence belongs to the potassium channel family. C (Shaw) (TC 1.A.1.2) subfamily. Kv3.1/KCNC1 sub-subfamily. As to quaternary structure, homotetramer. Homomultimer. Heteromultimer with KCNG3, KCNG4 and KCNV2. Heteromultimer with KCNC2. Heterotetramer with KCNC3. Interacts with the ancillary subunits KCNE1 and KCNE2; the interaction modulates channel activity. N-glycosylated; contains sialylated glycans. As to expression, expressed in brain. Expressed in globus pallidal neurons of the basal ganglia (at protein level). Detected on Purkinje cells in the cerebellum molecular layer (at protein level).

Its subcellular location is the cell membrane. It is found in the cell projection. It localises to the axon. The protein resides in the presynaptic cell membrane. It carries out the reaction K(+)(in) = K(+)(out). Voltage-gated potassium channel that opens in response to the voltage difference across the membrane and through which potassium ions pass in accordance with their electrochemical gradient. The mechanism is time-dependent and inactivation is slow. Plays an important role in the rapid repolarization of fast-firing brain neurons. Can form functional homotetrameric channels and heterotetrameric channels that contain variable proportions of KCNC2, and possibly other family members as well. Contributes to fire sustained trains of very brief action potentials at high frequency in pallidal neurons. The polypeptide is Voltage-gated potassium channel KCNC1 (Rattus norvegicus (Rat)).